The chain runs to 184 residues: Dynactin subunit 6 (184 aa).

It belongs to the dynactin subunits 5/6 family. Dynactin subunit 6 subfamily. As to quaternary structure, subunit of dynactin, a multiprotein complex part of a tripartite complex with dynein and a adapter, such as BICDL1, BICD2 or HOOK3. The dynactin complex is built around ACTR1A/ACTB filament and consists of an actin-related filament composed of a shoulder domain, a pointed end and a barbed end.

The protein resides in the cytoplasm. Its subcellular location is the cytoskeleton. Functionally, part of the dynactin complex that activates the molecular motor dynein for ultra-processive transport along microtubules. In Nematostella vectensis (Starlet sea anemone), this protein is Dynactin subunit 6 (dctn6).